The chain runs to 504 residues: Ent-kaurene oxidase-like 3 (504 aa).

A helical transmembrane segment spans residues 3–23 (SLLAAGAGGIGVAAAAVGGFI). C448 is a binding site for heme.

The protein belongs to the cytochrome P450 family. It depends on heme as a cofactor. As to expression, expressed in leaf blades.

The protein localises to the membrane. In terms of biological role, may hydroxylate diterpenes. In Oryza sativa subsp. japonica (Rice), this protein is Ent-kaurene oxidase-like 3.